Reading from the N-terminus, the 48-residue chain is Cytochrome c oxidase subunit 2 (48 aa).

Residues 1-14 lie on the Mitochondrial intermembrane side of the membrane; it reads MAHPAQLGLQDASS. The chain crosses the membrane as a helical span at residues 15 to 45; that stretch reads PIXEELLHFHEDALMIVFLISTLVLYIITTT. Residues 46–48 lie on the Mitochondrial matrix side of the membrane; the sequence is VST.

The protein belongs to the cytochrome c oxidase subunit 2 family. In terms of assembly, component of the cytochrome c oxidase (complex IV, CIV), a multisubunit enzyme composed of 14 subunits. The complex is composed of a catalytic core of 3 subunits MT-CO1, MT-CO2 and MT-CO3, encoded in the mitochondrial DNA, and 11 supernumerary subunits COX4I, COX5A, COX5B, COX6A, COX6B, COX6C, COX7A, COX7B, COX7C, COX8 and NDUFA4, which are encoded in the nuclear genome. The complex exists as a monomer or a dimer and forms supercomplexes (SCs) in the inner mitochondrial membrane with NADH-ubiquinone oxidoreductase (complex I, CI) and ubiquinol-cytochrome c oxidoreductase (cytochrome b-c1 complex, complex III, CIII), resulting in different assemblies (supercomplex SCI(1)III(2)IV(1) and megacomplex MCI(2)III(2)IV(2)). Found in a complex with TMEM177, COA6, COX18, COX20, SCO1 and SCO2. Interacts with TMEM177 in a COX20-dependent manner. Interacts with COX20. Interacts with COX16. It depends on Cu cation as a cofactor.

It localises to the mitochondrion inner membrane. It catalyses the reaction 4 Fe(II)-[cytochrome c] + O2 + 8 H(+)(in) = 4 Fe(III)-[cytochrome c] + 2 H2O + 4 H(+)(out). Functionally, component of the cytochrome c oxidase, the last enzyme in the mitochondrial electron transport chain which drives oxidative phosphorylation. The respiratory chain contains 3 multisubunit complexes succinate dehydrogenase (complex II, CII), ubiquinol-cytochrome c oxidoreductase (cytochrome b-c1 complex, complex III, CIII) and cytochrome c oxidase (complex IV, CIV), that cooperate to transfer electrons derived from NADH and succinate to molecular oxygen, creating an electrochemical gradient over the inner membrane that drives transmembrane transport and the ATP synthase. Cytochrome c oxidase is the component of the respiratory chain that catalyzes the reduction of oxygen to water. Electrons originating from reduced cytochrome c in the intermembrane space (IMS) are transferred via the dinuclear copper A center (CU(A)) of subunit 2 and heme A of subunit 1 to the active site in subunit 1, a binuclear center (BNC) formed by heme A3 and copper B (CU(B)). The BNC reduces molecular oxygen to 2 water molecules using 4 electrons from cytochrome c in the IMS and 4 protons from the mitochondrial matrix. This chain is Cytochrome c oxidase subunit 2 (mt-co2), found in Polypterus sp. (Bichir).